The primary structure comprises 300 residues: Protein N-terminal and lysine N-methyltransferase EFM7 (300 aa).

Residues W75, 101 to 103 (GAG), D123, W156, and S179 contribute to the S-adenosyl-L-methionine site.

The protein belongs to the class I-like SAM-binding methyltransferase superfamily. EFM7 family.

The protein resides in the cytoplasm. Its function is as follows. S-adenosyl-L-methionine-dependent protein methyltransferase that trimethylates the N-terminal glycine 'Gly-2' of elongation factor 1-alpha, before also catalyzing the mono- and dimethylation of 'Lys-3'. In Cryptococcus neoformans var. neoformans serotype D (strain JEC21 / ATCC MYA-565) (Filobasidiella neoformans), this protein is Protein N-terminal and lysine N-methyltransferase EFM7.